Here is a 141-residue protein sequence, read N- to C-terminus: ATP synthase epsilon chain (141 aa).

It belongs to the ATPase epsilon chain family. F-type ATPases have 2 components, CF(1) - the catalytic core - and CF(0) - the membrane proton channel. CF(1) has five subunits: alpha(3), beta(3), gamma(1), delta(1), epsilon(1). CF(0) has three main subunits: a, b and c.

The protein resides in the cell membrane. Functionally, produces ATP from ADP in the presence of a proton gradient across the membrane. This chain is ATP synthase epsilon chain (atpC), found in Mycoplasmopsis pulmonis (strain UAB CTIP) (Mycoplasma pulmonis).